The sequence spans 208 residues: Thymidylate kinase (208 aa).

An ATP-binding site is contributed by 9–16 (GGEGCGKS).

It belongs to the thymidylate kinase family.

The catalysed reaction is dTMP + ATP = dTDP + ADP. Functionally, phosphorylation of dTMP to form dTDP in both de novo and salvage pathways of dTTP synthesis. The chain is Thymidylate kinase from Dehalococcoides mccartyi (strain CBDB1).